An 87-amino-acid chain; its full sequence is Small ribosomal subunit protein uS19 (87 aa).

The interval 1 to 29 is disordered; it reads MARSLKKGPFVDHHLQKKVDVQNKEGTKK. The span at 9-28 shows a compositional bias: basic and acidic residues; the sequence is PFVDHHLQKKVDVQNKEGTK.

This sequence belongs to the universal ribosomal protein uS19 family.

In terms of biological role, protein S19 forms a complex with S13 that binds strongly to the 16S ribosomal RNA. This Protochlamydia amoebophila (strain UWE25) protein is Small ribosomal subunit protein uS19.